A 120-amino-acid chain; its full sequence is Large ribosomal subunit protein uL18 (120 aa).

Belongs to the universal ribosomal protein uL18 family. As to quaternary structure, part of the 50S ribosomal subunit. Part of the 5S rRNA/L5/L18/L25 subcomplex. Contacts the 23S rRNA and 5S rRNA. Required for catalysis of RNase M5.

Functionally, this is one of the proteins that bind and probably mediate the attachment of the 5S RNA into the large ribosomal subunit, where it forms part of the central protuberance. In terms of biological role, required for correct processing of both the 5' and 3' ends of 5S rRNA precursor, which is does in conjunction with ribonuclease M5 (RNase M5, rnmV). Possibly folds the 5S rRNA precursor into the correct conformation, thus acting as a chaperone. In Bacillus subtilis (strain 168), this protein is Large ribosomal subunit protein uL18.